The primary structure comprises 423 residues: Inactive autotransporter heptosyltransferase BimC (423 aa).

The segment covering 1-10 has biased composition (polar residues); the sequence is MPKVTFSGSA. A disordered region spans residues 1–49; sequence MPKVTFSGSAPTLGVHAPPALDPRQPASPPPAASNGTHARGFSPPADMP. Residues cysteine 371, cysteine 374, cysteine 390, and cysteine 402 each coordinate Fe(3+).

It belongs to the glycosyltransferase 9 family. In terms of assembly, homotrimer or homotetramer. The cofactor is Fe(3+).

The protein resides in the cell inner membrane. Its subcellular location is the cytoplasm. Iron-binding protein which is required for the asymmetric polar distribution of the autotransporter BimA on the bacterial surface prior to its translocation into bacterial periplasm. Lacks heptosyltransferase activity. This is Inactive autotransporter heptosyltransferase BimC from Burkholderia thailandensis (strain ATCC 700388 / DSM 13276 / CCUG 48851 / CIP 106301 / E264).